The primary structure comprises 167 residues: Transcription antitermination protein NusB (167 aa).

The disordered stretch occupies residues 1 to 32 (MSDTPETGKPAAGTKPAARTEAKAPPKSARRR).

This sequence belongs to the NusB family.

In terms of biological role, involved in transcription antitermination. Required for transcription of ribosomal RNA (rRNA) genes. Binds specifically to the boxA antiterminator sequence of the ribosomal RNA (rrn) operons. This Cupriavidus pinatubonensis (strain JMP 134 / LMG 1197) (Cupriavidus necator (strain JMP 134)) protein is Transcription antitermination protein NusB.